We begin with the raw amino-acid sequence, 479 residues long: Ribulose bisphosphate carboxylase large chain (479 aa).

Positions 1–2 (MS) are excised as a propeptide. An N-acetylproline modification is found at Pro3. Asn123 and Thr173 together coordinate substrate. Lys175 acts as the Proton acceptor in catalysis. Lys177 is a substrate binding site. Residues Lys201, Asp203, and Glu204 each contribute to the Mg(2+) site. Lys201 is subject to N6-carboxylysine. The Proton acceptor role is filled by His294. Substrate-binding residues include Arg295, His327, and Ser379.

It belongs to the RuBisCO large chain family. Type I subfamily. Heterohexadecamer of 8 large chains and 8 small chains; disulfide-linked. The disulfide link is formed within the large subunit homodimers. The cofactor is Mg(2+). In terms of processing, the disulfide bond which can form in the large chain dimeric partners within the hexadecamer appears to be associated with oxidative stress and protein turnover.

The protein resides in the plastid. Its subcellular location is the chloroplast. The catalysed reaction is 2 (2R)-3-phosphoglycerate + 2 H(+) = D-ribulose 1,5-bisphosphate + CO2 + H2O. It carries out the reaction D-ribulose 1,5-bisphosphate + O2 = 2-phosphoglycolate + (2R)-3-phosphoglycerate + 2 H(+). Its function is as follows. RuBisCO catalyzes two reactions: the carboxylation of D-ribulose 1,5-bisphosphate, the primary event in carbon dioxide fixation, as well as the oxidative fragmentation of the pentose substrate in the photorespiration process. Both reactions occur simultaneously and in competition at the same active site. This Hordeum vulgare (Barley) protein is Ribulose bisphosphate carboxylase large chain.